The sequence spans 504 residues: Anaerobic nitric oxide reductase transcription regulator NorR (504 aa).

Asp-57 is subject to 4-aspartylphosphate. The 230-residue stretch at 187 to 416 (MIGLSPGMTQ…LEHAIHRAVV (230 aa)) folds into the Sigma-54 factor interaction domain. Residues 215–222 (GETGTGKE) and 278–287 (ADNGTLFLDE) contribute to the ATP site. The H-T-H motif DNA-binding region spans 479-498 (WAACARMLETDVANLHRLAK).

The protein operates within nitrogen metabolism; nitric oxide reduction. Functionally, required for the expression of anaerobic nitric oxide (NO) reductase, acts as a transcriptional activator for at least the norVW operon. Activation also requires sigma-54. This chain is Anaerobic nitric oxide reductase transcription regulator NorR, found in Escherichia coli O45:K1 (strain S88 / ExPEC).